The primary structure comprises 208 residues: Small ribosomal subunit protein uS4 (208 aa).

An S4 RNA-binding domain is found at 97 to 160 (TRLDNVCYRM…QKQLRVQEAL (64 aa)).

Belongs to the universal ribosomal protein uS4 family. As to quaternary structure, part of the 30S ribosomal subunit. Contacts protein S5. The interaction surface between S4 and S5 is involved in control of translational fidelity.

Functionally, one of the primary rRNA binding proteins, it binds directly to 16S rRNA where it nucleates assembly of the body of the 30S subunit. In terms of biological role, with S5 and S12 plays an important role in translational accuracy. This Xanthomonas oryzae pv. oryzae (strain MAFF 311018) protein is Small ribosomal subunit protein uS4.